Here is a 298-residue protein sequence, read N- to C-terminus: GTP cyclohydrolase FolE2 (298 aa).

Belongs to the GTP cyclohydrolase IV family.

The catalysed reaction is GTP + H2O = 7,8-dihydroneopterin 3'-triphosphate + formate + H(+). Its pathway is cofactor biosynthesis; 7,8-dihydroneopterin triphosphate biosynthesis; 7,8-dihydroneopterin triphosphate from GTP: step 1/1. Its function is as follows. Converts GTP to 7,8-dihydroneopterin triphosphate. In Neisseria meningitidis serogroup C (strain 053442), this protein is GTP cyclohydrolase FolE2.